The sequence spans 142 residues: Bacilliredoxin ABC2448 (142 aa).

It belongs to the bacilliredoxin family.

The chain is Bacilliredoxin ABC2448 from Shouchella clausii (strain KSM-K16) (Alkalihalobacillus clausii).